The primary structure comprises 413 residues: Multifunctional CCA protein (413 aa).

2 residues coordinate ATP: Gly-8 and Arg-11. Residues Gly-8 and Arg-11 each coordinate CTP. Mg(2+) contacts are provided by Glu-21 and Asp-23. ATP is bound by residues Arg-91, Arg-137, and Arg-140. CTP contacts are provided by Arg-91, Arg-137, and Arg-140. In terms of domain architecture, HD spans Cys-228–Leu-329.

This sequence belongs to the tRNA nucleotidyltransferase/poly(A) polymerase family. Bacterial CCA-adding enzyme type 1 subfamily. As to quaternary structure, monomer. Can also form homodimers and oligomers. Mg(2+) is required as a cofactor. Requires Ni(2+) as cofactor.

The enzyme catalyses a tRNA precursor + 2 CTP + ATP = a tRNA with a 3' CCA end + 3 diphosphate. It carries out the reaction a tRNA with a 3' CCA end + 2 CTP + ATP = a tRNA with a 3' CCACCA end + 3 diphosphate. Its function is as follows. Catalyzes the addition and repair of the essential 3'-terminal CCA sequence in tRNAs without using a nucleic acid template. Adds these three nucleotides in the order of C, C, and A to the tRNA nucleotide-73, using CTP and ATP as substrates and producing inorganic pyrophosphate. tRNA 3'-terminal CCA addition is required both for tRNA processing and repair. Also involved in tRNA surveillance by mediating tandem CCA addition to generate a CCACCA at the 3' terminus of unstable tRNAs. While stable tRNAs receive only 3'-terminal CCA, unstable tRNAs are marked with CCACCA and rapidly degraded. This is Multifunctional CCA protein from Acinetobacter baylyi (strain ATCC 33305 / BD413 / ADP1).